The chain runs to 442 residues: F-box/FBD/LRR-repeat protein At3g14710 (442 aa).

Residues 26-73 (DKFSSLLESVVSIILSQLPTAEAVSTSVLSKSWKNIWTNITDLHFDDT) enclose the F-box domain. LRR repeat units follow at residues 126–147 (NLQRLVVTCNDLEIISFSSLFP), 151–172 (SLVELRLRTKSILDISAPAILP), and 173–194 (NLKFLSLEDARIFNMSSVSKNL). The 45-residue stretch at 370-414 (VESPDCVTTMLKVLQIRNFKPNRLQISVLRYVLDNAEILGSVILS) folds into the FBD domain.

This is F-box/FBD/LRR-repeat protein At3g14710 from Arabidopsis thaliana (Mouse-ear cress).